The primary structure comprises 161 residues: Myosin regulatory light chain A, smooth adductor muscle (161 aa).

Ala-1 carries the post-translational modification Blocked amino end (Ala). 2 EF-hand domains span residues 20–55 (KLMQEMKEAFTMIDQNRDGFIDINDLKEMFSSLGRT) and 89–124 (DTEETLRNAFAMFDELDTKKLNIEYIKDLLENMGDN). Residues Asp-33, Asn-35, Asp-37, and Asp-44 each coordinate Ca(2+).

Functionally, in molluscan muscle, calcium regulation is associated with myosin rather than with actin. Muscle myosin contains two types of light chains: the catalytic light chain, essential for ATPase activity, and the regulatory light chain, a calcium-binding protein responsible for Ca(2+) dependent binding and Ca(2+) dependent Mg-ATPase activity. This Mizuhopecten yessoensis (Japanese scallop) protein is Myosin regulatory light chain A, smooth adductor muscle.